Here is a 324-residue protein sequence, read N- to C-terminus: MEPMATVTLKDIKEAHKRIEKYIHKTPVLTNSTINELAGKELYFKCENLQKTGSFKMRGACNAIFSLDEEELSKGVVTHSSGNHGQALSYASKVRCVKCYVVVPEDAPSVKLNAICGYGATVTKCKATLEARESNTKQLIEQHSCKLIHPFDNLQVIAGQGTASLELMEQVENLDAIITPVGGGGLLSGTCITAKSLNPNIKVFAAEPLGADDTYRSLLSGEIQKHTPGKPNTIADGLLTTVGSLTFPIIKENCDGVILVTEDEIKYAMKLVWERMKIIIEPSSATTLAAILKQEFKDKKDIKKVGIIISGGNVDLSSISKILN.

Positions 32, 51, and 52 each coordinate ATP. The Proton acceptor role is filled by Lys-56. Lys-56 bears the N6-(pyridoxal phosphate)lysine mark. Residue Thr-78 coordinates Ca(2+). The Proton acceptor role is filled by Ser-81. Asn-83 lines the pyridoxal 5'-phosphate pocket. ATP-binding residues include Gln-86 and Tyr-118. Asp-175 contributes to the Mg(2+) binding site. Pyridoxal 5'-phosphate contacts are provided by Gly-182, Gly-183, Gly-184, and Gly-185. Residues Glu-207, Ala-211, and Asp-213 each contribute to the Ca(2+) site. Residues Glu-207, Ala-211, and Asp-213 each contribute to the Mg(2+) site. Positions 207, 211, and 213 each coordinate Mn(2+). Lys-277 is an ATP binding site. Ser-310 contributes to the pyridoxal 5'-phosphate binding site. Asn-313 contacts ATP.

The protein belongs to the serine/threonine dehydratase family. Homodimer. It depends on Mg(2+) as a cofactor. Requires Mn(2+) as cofactor. Ca(2+) serves as cofactor. The cofactor is pyridoxal 5'-phosphate.

It carries out the reaction L-serine = D-serine. The catalysed reaction is L-serine = pyruvate + NH4(+). It catalyses the reaction D-serine = pyruvate + NH4(+). Catalyzes the synthesis of D-serine from L-serine. Has dehydratase activity towards both L-serine and D-serine. The sequence is that of Serine racemase (srr) from Dictyostelium discoideum (Social amoeba).